The primary structure comprises 727 residues: NADH-ubiquinone oxidoreductase 75 kDa subunit, mitochondrial (727 aa).

Residues 1–23 (MLRIPIKRALIGLSNSPKGYVRT) constitute a mitochondrion transit peptide. The 2Fe-2S ferredoxin-type domain occupies 30 to 108 (NLIEVFVDGQ…GWNILTNSEK (79 aa)). [2Fe-2S] cluster is bound by residues C64, C75, and C78. K84 is modified (N6-acetyllysine). Residue C92 coordinates [2Fe-2S] cluster. A 4Fe-4S His(Cys)3-ligated-type domain is found at 108 to 147 (KSKKAREGVMEFLLANHPLDCPICDQGGECDLQDQSMMFG). [4Fe-4S] cluster contacts are provided by H124, C128, C131, C137, C176, C179, C182, and C226. Residues 245-301 (TRKTESIDVMDAVGSNIVVSTRTGEVMRILPRMHEDINEEWISDKTRFAYDGLKRQR) enclose the 4Fe-4S Mo/W bis-MGD-type domain. A Phosphoserine modification is found at S461. An N6-acetyllysine mark is found at K467, K499, and K709.

This sequence belongs to the complex I 75 kDa subunit family. Core subunit of respiratory chain NADH dehydrogenase (Complex I) which is composed of 45 different subunits. This is the largest subunit of complex I and it is a component of the iron-sulfur (IP) fragment of the enzyme. Complex I associates with ubiquinol-cytochrome reductase complex (Complex III) to form supercomplexes. In astrocytes, less complex I is assembled into supercomplexes as compared to neurons. Interacts with MDM2. Interacts with AKAP1. Requires [2Fe-2S] cluster as cofactor. [4Fe-4S] cluster serves as cofactor. Acetylation of Lys-84 is observed in liver mitochondria from fasted mice but not from fed mice. As to expression, brain. More abundant in neurons than in astrocytes (at protein level).

It localises to the mitochondrion inner membrane. The enzyme catalyses a ubiquinone + NADH + 5 H(+)(in) = a ubiquinol + NAD(+) + 4 H(+)(out). In terms of biological role, core subunit of the mitochondrial membrane respiratory chain NADH dehydrogenase (Complex I) which catalyzes electron transfer from NADH through the respiratory chain, using ubiquinone as an electron acceptor. Essential for catalysing the entry and efficient transfer of electrons within complex I. Plays a key role in the assembly and stability of complex I and participates in the association of complex I with ubiquinol-cytochrome reductase complex (Complex III) to form supercomplexes. The sequence is that of NADH-ubiquinone oxidoreductase 75 kDa subunit, mitochondrial (Ndufs1) from Mus musculus (Mouse).